The sequence spans 62 residues: MTTLFQLSVFALIILSFLLVIGVPVVLASPDGWSTRKNTVFSGASLWIGLVFLVGILNSFIS.

2 consecutive transmembrane segments (helical) span residues Ser-8–Ala-28 and Phe-41–Ile-61.

The protein belongs to the PsbZ family. As to quaternary structure, PSII is composed of 1 copy each of membrane proteins PsbA, PsbB, PsbC, PsbD, PsbE, PsbF, PsbH, PsbI, PsbJ, PsbK, PsbL, PsbM, PsbT, PsbY, PsbZ, Psb30/Ycf12, at least 3 peripheral proteins of the oxygen-evolving complex and a large number of cofactors. It forms dimeric complexes.

The protein resides in the plastid. It localises to the chloroplast thylakoid membrane. May control the interaction of photosystem II (PSII) cores with the light-harvesting antenna, regulates electron flow through the 2 photosystem reaction centers. PSII is a light-driven water plastoquinone oxidoreductase, using light energy to abstract electrons from H(2)O, generating a proton gradient subsequently used for ATP formation. This chain is Photosystem II reaction center protein Z, found in Staurastrum punctulatum (Green alga).